Here is a 454-residue protein sequence, read N- to C-terminus: MEKGDTHILVFPFPSQGHINPLLQLSKRLIAKGIKVSLVTTLHVSNHLQLQGAYSNSVKIEVISDGSEDRLETDTMRQTLDRFRQKMTKNLEDFLQKAMVSSNPPKFILYDSTMPWVLEVAKEFGLDRAPFYTQSCALNSINYHVLHGQLKLPPETPTISLPSMPLLRPSDLPAYDFDPASTDTIIDLLTSQYSNIQDANLLFCNTFDKLEGEIIQWMETLGRPVKTVGPTVPSAYLDKRVENDKHYGLSLFKPNEDVCLKWLDSKPSGSVLYVSYGSLVEMGEEQLKELALGIKETGKFFLWVVRDTEAEKLPPNFVESVAEKGLVVSWCSQLEVLAHPSVGCFFTHCGWNSTLEALCLGVPVVAFPQWADQVTNAKFLEDVWKVGKRVKRNEQRLASKEEVRSCIWEVMEGERASEFKSNSMEWKKWAKEAVDEGGSSDKNIEEFVAMLKQT.

The active-site Proton acceptor is histidine 18. Histidine 18 lines the an anthocyanidin pocket. Catalysis depends on aspartate 111, which acts as the Charge relay. Residue histidine 144 participates in an anthocyanidin binding. Cysteines 259 and 331 form a disulfide. Serine 278, cysteine 331, glutamine 333, tryptophan 351, asparagine 352, serine 353, and glutamate 356 together coordinate UDP-alpha-D-glucose. An an anthocyanidin-binding site is contributed by alanine 371. UDP-alpha-D-glucose is bound by residues aspartate 372 and glutamine 373.

This sequence belongs to the UDP-glycosyltransferase family. In terms of tissue distribution, highly expressed in young fruits 15 days after anthesis (15-DAA).

It carries out the reaction mogrol + UDP-alpha-D-glucose = mogroside IE + UDP + H(+). The protein operates within secondary metabolite biosynthesis; terpenoid biosynthesis. Activity is increased by Mg(2+). In terms of biological role, UDP-glycosyltransferase involved in the biosynthesis of cucurbitacin and mogroside tetracyclic triterpene natural products (e.g. siamenoside I and mogrosides IV, V and VI). Cucurbitacins have cytotoxic properties and exhibit deterrent taste as a defense barrier against herbivores. Mogrosides are nonsugar highly oxygenated compounds used as high-intensity zero-calorie sweeteners; they also possess pharmacological properties such as regulating immunity, lowering blood sugar and lipid levels, protecting the liver, and acting as antioxidants and antitumor agents. Catalyzes the transfer of a glucose moiety to the C-3 hydroxyl of mogrol to form mogroside I-E. Besides mogrol, UGT74AC1 also shows activity in vitro with quercetin and naringenin as substrate. The chain is Mogroside I-E synthase from Siraitia grosvenorii (Monk's fruit).